Here is a 239-residue protein sequence, read N- to C-terminus: Small ribosomal subunit protein uS3 (239 aa).

One can recognise a KH type-2 domain in the interval Arg-40–Asn-108. The interval Lys-212 to Glu-239 is disordered. The segment covering Ala-215 to Pro-226 has biased composition (basic and acidic residues). Basic residues predominate over residues Arg-227–Glu-239.

Belongs to the universal ribosomal protein uS3 family. In terms of assembly, part of the 30S ribosomal subunit. Forms a tight complex with proteins S10 and S14.

Its function is as follows. Binds the lower part of the 30S subunit head. Binds mRNA in the 70S ribosome, positioning it for translation. In Thermus thermophilus (strain ATCC BAA-163 / DSM 7039 / HB27), this protein is Small ribosomal subunit protein uS3 (rpsC).